The sequence spans 662 residues: Methyl-accepting chemotaxis protein TlpA (662 aa).

Topologically, residues M1–R16 are cytoplasmic. The chain crosses the membrane as a helical span at residues L17–Y37. At Q38–I281 the chain is on the extracellular side. In terms of domain architecture, Cache spans V152 to W228. Residues M282–I302 form a helical membrane-spanning segment. One can recognise an HAMP domain in the interval R303–H355. The Cytoplasmic portion of the chain corresponds to R303–K662. A glutamate methyl ester (Glu) mark is found at E370, E594, E629, and E636. A Methyl-accepting transducer domain is found at S374 to T610.

The protein belongs to the methyl-accepting chemotaxis (MCP) protein family. Interacts with YabA.

The protein resides in the cell membrane. Chemotactic-signal transducers respond to changes in the concentration of attractants and repellents in the environment, transduce a signal from the outside to the inside of the cell, and facilitate sensory adaptation through the variation of the level of methylation. All amino acids serve as attractants in B.subtilis, they appear to cause an increase in the turnover methyl groups, leading to methylation of an unidentified acceptor, while repellents have been shown to cause a decrease in methyl group turnover. The methyl groups are added by a methyltransferase and removed by a methylesterase. The chain is Methyl-accepting chemotaxis protein TlpA from Bacillus subtilis (strain 168).